We begin with the raw amino-acid sequence, 189 residues long: dTTP/UTP pyrophosphatase (189 aa).

The active-site Proton acceptor is D70.

Belongs to the Maf family. YhdE subfamily. A divalent metal cation is required as a cofactor.

The protein resides in the cytoplasm. The enzyme catalyses dTTP + H2O = dTMP + diphosphate + H(+). It carries out the reaction UTP + H2O = UMP + diphosphate + H(+). Functionally, nucleoside triphosphate pyrophosphatase that hydrolyzes dTTP and UTP. May have a dual role in cell division arrest and in preventing the incorporation of modified nucleotides into cellular nucleic acids. The chain is dTTP/UTP pyrophosphatase from Akkermansia muciniphila (strain ATCC BAA-835 / DSM 22959 / JCM 33894 / BCRC 81048 / CCUG 64013 / CIP 107961 / Muc).